We begin with the raw amino-acid sequence, 159 residues long: MGITKKPDLNDPVLRAKLAKGMGHNYYGEPAWPNDLLYIFPVVILGTIACNVGLAVLEPSMIGEPADPFATPLEILPEWYFFPVFQILRTVPNKLLGVLLMVSVPAGLLTVPFLENVNKFQNPFRRPVATTVFLVGTVVALWLGIGATLPIDKSLTLGL.

3 helical membrane-spanning segments follow: residues 36–56, 95–115, and 131–151; these read LLYI…GLAV, LLGV…PFLE, and TVFL…TLPI.

The protein belongs to the cytochrome b family. PetD subfamily. In terms of assembly, the 4 large subunits of the cytochrome b6-f complex are cytochrome b6, subunit IV (17 kDa polypeptide, petD), cytochrome f and the Rieske protein, while the 4 small subunits are petG, petL, petM and petN. The complex functions as a dimer.

Its subcellular location is the plastid. The protein localises to the chloroplast thylakoid membrane. Functionally, component of the cytochrome b6-f complex, which mediates electron transfer between photosystem II (PSII) and photosystem I (PSI), cyclic electron flow around PSI, and state transitions. In Piper cenocladum (Ant piper), this protein is Cytochrome b6-f complex subunit 4.